A 793-amino-acid polypeptide reads, in one-letter code: Coiled-coil domain-containing protein 175 (793 aa).

Coiled coils occupy residues 131-163 (EINT…NEAL), 205-377 (KRED…VLSE), 431-535 (KTVY…MLMK), 562-679 (LPQL…KYRE), and 716-745 (LVDN…QHVS).

This is Coiled-coil domain-containing protein 175 (CCDC175) from Homo sapiens (Human).